Consider the following 406-residue polypeptide: 8-amino-7-oxononanoate synthase (406 aa).

R21 is a binding site for substrate. 112-113 (GY) is a binding site for pyridoxal 5'-phosphate. Residue H137 coordinates substrate. S183, H211, and T239 together coordinate pyridoxal 5'-phosphate. An N6-(pyridoxal phosphate)lysine modification is found at K242. T358 provides a ligand contact to substrate.

It belongs to the class-II pyridoxal-phosphate-dependent aminotransferase family. BioF subfamily. Homodimer. It depends on pyridoxal 5'-phosphate as a cofactor.

It carries out the reaction 6-carboxyhexanoyl-[ACP] + L-alanine + H(+) = (8S)-8-amino-7-oxononanoate + holo-[ACP] + CO2. It participates in cofactor biosynthesis; biotin biosynthesis. Catalyzes the decarboxylative condensation of pimeloyl-[acyl-carrier protein] and L-alanine to produce 8-amino-7-oxononanoate (AON), [acyl-carrier protein], and carbon dioxide. This Burkholderia cenocepacia (strain HI2424) protein is 8-amino-7-oxononanoate synthase.